The primary structure comprises 239 residues: 1-(5-phosphoribosyl)-5-[(5-phosphoribosylamino)methylideneamino] imidazole-4-carboxamide isomerase (239 aa).

D9 serves as the catalytic Proton acceptor. D131 functions as the Proton donor in the catalytic mechanism.

The protein belongs to the HisA/HisF family.

It localises to the cytoplasm. It catalyses the reaction 1-(5-phospho-beta-D-ribosyl)-5-[(5-phospho-beta-D-ribosylamino)methylideneamino]imidazole-4-carboxamide = 5-[(5-phospho-1-deoxy-D-ribulos-1-ylimino)methylamino]-1-(5-phospho-beta-D-ribosyl)imidazole-4-carboxamide. It functions in the pathway amino-acid biosynthesis; L-histidine biosynthesis; L-histidine from 5-phospho-alpha-D-ribose 1-diphosphate: step 4/9. This is 1-(5-phosphoribosyl)-5-[(5-phosphoribosylamino)methylideneamino] imidazole-4-carboxamide isomerase from Bacteroides fragilis (strain YCH46).